A 517-amino-acid polypeptide reads, in one-letter code: MFS efflux transporter inpD (517 aa).

Positions 1-24 (MEKTQTPSLTPDELSARSSTPFEE) are disordered. 5 consecutive transmembrane segments (helical) span residues 37 to 57 (LKFS…ALSL), 59 to 79 (DIGW…LVFG), 89 to 109 (IVYL…ATAP), 112 to 132 (IALI…LSGA), and 151 to 171 (ILGA…GGII). N-linked (GlcNAc...) asparagine glycosylation occurs at Asn172. Helical transmembrane passes span 178–198 (WIFY…VFLL), 219–239 (LPAF…LLWG), 247–267 (NARI…FMLV), 292–312 (FFSF…PIWL), 328–348 (LPII…TPVI), 352–372 (VPFM…LSTL), 381–401 (VLGF…QTLV), 412–432 (IPIG…IALS), and 485–505 (AIVK…IGVL).

It belongs to the major facilitator superfamily.

It localises to the cell membrane. Functionally, MFS efflux transporter; part of the inp gene cluster that mediates the biosynthesis of fellutamide B, a mycotoxin that acts as a proteasome inhibitor. In the first step of fellutabmide B biosynthesis inpC activates 3-hydroxydodecanoic acid to generate 3-hydroxydodecanoyl-AMP that is then loaded onto the T0 domain of inpB. The 3-hydroxydodecanoyl-S-phosphopantetheinyl-T0 is sequentially extended with L-Asn and L-Gln by the two CAT modules of inpB. The linear lipodipeptide from inpB is then transferred onto inpA for the addition of the third amino acid, L-Leu. Reductive releasing of the lipotripeptide by the TE domain of inpA produces (2S)-fellutamide B. InpF might be involved in the release and transfer of the lipodipeptide from inpB to inpA. The inp cluster-encoded proteasome subunit inpE confers resistance to internally produced fellutamides. The MFS efflux transporter inpD may contribute to fellutamide resistance as well. In Emericella nidulans (strain FGSC A4 / ATCC 38163 / CBS 112.46 / NRRL 194 / M139) (Aspergillus nidulans), this protein is MFS efflux transporter inpD.